The primary structure comprises 443 residues: Carboxypeptidase M (443 aa).

The first 17 residues, 1–17, serve as a signal peptide directing secretion; it reads MDFPCLWLGLLLPLVAA. The Peptidase M14 domain occupies 21–311; the sequence is NYHRQEGMEA…ASLIEYIKQV (291 aa). Asn-38 carries an N-linked (GlcNAc...) asparagine glycan. The Zn(2+) site is built by His-83 and Glu-86. Residues Asn-115 and Asn-164 are each glycosylated (N-linked (GlcNAc...) asparagine). Cystine bridges form between Cys-138-Cys-285, Cys-242-Cys-284, and Cys-341-Cys-410. His-190 contacts Zn(2+). Residue Glu-281 is the Proton donor/acceptor of the active site. N-linked (GlcNAc...) asparagine glycans are attached at residues Asn-363 and Asn-384. Ser-423 carries GPI-anchor amidated serine lipidation. Residues 424–443 constitute a propeptide, removed in mature form; it reads AATKPSLFLFLVSLLHIFFK.

Belongs to the peptidase M14 family. The cofactor is Zn(2+).

Its subcellular location is the cell membrane. The enzyme catalyses Cleavage of C-terminal arginine or lysine residues from polypeptides.. With respect to regulation, inhibited by O-phenanthroline and MGTA and activated by cobalt. Its function is as follows. Specifically removes C-terminal basic residues (Arg or Lys) from peptides and proteins. It is believed to play important roles in the control of peptide hormone and growth factor activity at the cell surface, and in the membrane-localized degradation of extracellular proteins. This chain is Carboxypeptidase M (CPM), found in Homo sapiens (Human).